Consider the following 240-residue polypeptide: Zinc import ATP-binding protein ZnuC (240 aa).

Residues 1–219 (MSLLSIAALD…PAYRAMFGLD (219 aa)) enclose the ABC transporter domain. ATP is bound at residue 36–43 (GPNGSGKT).

Belongs to the ABC transporter superfamily. Zinc importer (TC 3.A.1.15.5) family. In terms of assembly, the complex is composed of two ATP-binding proteins (ZnuC), two transmembrane proteins (ZnuB) and a solute-binding protein (ZnuA).

The protein resides in the cell inner membrane. The enzyme catalyses Zn(2+)(out) + ATP(in) + H2O(in) = Zn(2+)(in) + ADP(in) + phosphate(in) + H(+)(in). Functionally, part of the ABC transporter complex ZnuABC involved in zinc import. Responsible for energy coupling to the transport system. The polypeptide is Zinc import ATP-binding protein ZnuC (Chromohalobacter salexigens (strain ATCC BAA-138 / DSM 3043 / CIP 106854 / NCIMB 13768 / 1H11)).